Reading from the N-terminus, the 132-residue chain is Small ribosomal subunit protein uS8 (132 aa).

This sequence belongs to the universal ribosomal protein uS8 family. As to quaternary structure, part of the 30S ribosomal subunit. Contacts proteins S5 and S12.

One of the primary rRNA binding proteins, it binds directly to 16S rRNA central domain where it helps coordinate assembly of the platform of the 30S subunit. This is Small ribosomal subunit protein uS8 from Paracoccus denitrificans (strain Pd 1222).